We begin with the raw amino-acid sequence, 215 residues long: Ribosomal RNA small subunit methyltransferase G (215 aa).

S-adenosyl-L-methionine-binding positions include G77, F82, 130-131 (IE), and R146.

It belongs to the methyltransferase superfamily. RNA methyltransferase RsmG family.

The protein localises to the cytoplasm. The enzyme catalyses guanosine(527) in 16S rRNA + S-adenosyl-L-methionine = N(7)-methylguanosine(527) in 16S rRNA + S-adenosyl-L-homocysteine. In terms of biological role, specifically methylates the N7 position of guanine in position 527 of 16S rRNA. The protein is Ribosomal RNA small subunit methyltransferase G of Bartonella bacilliformis (strain ATCC 35685 / KC583 / Herrer 020/F12,63).